A 163-amino-acid chain; its full sequence is Bacterial microcompartment assembly protein PduM (163 aa).

This sequence belongs to the PduM family. In terms of assembly, interacts with shell protein PduK.

The protein localises to the bacterial microcompartment. It participates in polyol metabolism; 1,2-propanediol degradation. Plays an essential role in assembly and/or stability of the bacterial microcompartment (BMC) dedicated to 1,2-propanediol (1,2-PD) degradation. In terms of biological role, expression of a cosmid containing the full 21-gene pdu operon in E.coli allows E.coli to grow on 1,2-propanediol (1,2-PD) with the appearance of bacterial microcompartments (BMC) in its cytoplasm. Its function is as follows. The 1,2-PD-specific bacterial microcompartment (BMC) concentrates low levels of 1,2-PD catabolic enzymes, concentrates volatile reaction intermediates thus enhancing pathway flux and keeps the level of toxic, mutagenic propionaldehyde low. The protein is Bacterial microcompartment assembly protein PduM of Citrobacter freundii.